An 85-amino-acid chain; its full sequence is Large ribosomal subunit protein bL27 (85 aa).

The tract at residues 1–23 (MAHKKAGGSSRNGRDSESKRLGV) is disordered.

This sequence belongs to the bacterial ribosomal protein bL27 family.

The sequence is that of Large ribosomal subunit protein bL27 from Nitrosococcus oceani (strain ATCC 19707 / BCRC 17464 / JCM 30415 / NCIMB 11848 / C-107).